Here is a 596-residue protein sequence, read N- to C-terminus: Chaperone protein DnaK (596 aa).

The residue at position 180 (threonine 180) is a Phosphothreonine; by autocatalysis.

This sequence belongs to the heat shock protein 70 family.

Its function is as follows. Acts as a chaperone. The protein is Chaperone protein DnaK of Thermotoga neapolitana (strain ATCC 49049 / DSM 4359 / NBRC 107923 / NS-E).